Consider the following 321-residue polypeptide: Lipoyl synthase (321 aa).

[4Fe-4S] cluster contacts are provided by Cys-68, Cys-73, Cys-79, Cys-94, Cys-98, Cys-101, and Ser-308. In terms of domain architecture, Radical SAM core spans 80–297 (FNHGTATFMI…KAEAMAMGFT (218 aa)).

It belongs to the radical SAM superfamily. Lipoyl synthase family. It depends on [4Fe-4S] cluster as a cofactor.

The protein resides in the cytoplasm. It catalyses the reaction [[Fe-S] cluster scaffold protein carrying a second [4Fe-4S](2+) cluster] + N(6)-octanoyl-L-lysyl-[protein] + 2 oxidized [2Fe-2S]-[ferredoxin] + 2 S-adenosyl-L-methionine + 4 H(+) = [[Fe-S] cluster scaffold protein] + N(6)-[(R)-dihydrolipoyl]-L-lysyl-[protein] + 4 Fe(3+) + 2 hydrogen sulfide + 2 5'-deoxyadenosine + 2 L-methionine + 2 reduced [2Fe-2S]-[ferredoxin]. Its pathway is protein modification; protein lipoylation via endogenous pathway; protein N(6)-(lipoyl)lysine from octanoyl-[acyl-carrier-protein]: step 2/2. Catalyzes the radical-mediated insertion of two sulfur atoms into the C-6 and C-8 positions of the octanoyl moiety bound to the lipoyl domains of lipoate-dependent enzymes, thereby converting the octanoylated domains into lipoylated derivatives. This chain is Lipoyl synthase, found in Yersinia pseudotuberculosis serotype O:1b (strain IP 31758).